The primary structure comprises 883 residues: Phosphoenolpyruvate carboxylase (883 aa).

Residues His-138 and Lys-546 contribute to the active site.

Belongs to the PEPCase type 1 family. It depends on Mg(2+) as a cofactor.

The enzyme catalyses oxaloacetate + phosphate = phosphoenolpyruvate + hydrogencarbonate. Functionally, forms oxaloacetate, a four-carbon dicarboxylic acid source for the tricarboxylic acid cycle. The polypeptide is Phosphoenolpyruvate carboxylase (Enterobacter sp. (strain 638)).